The sequence spans 322 residues: 4-hydroxythreonine-4-phosphate dehydrogenase (322 aa).

Thr-132 contributes to the substrate binding site. The a divalent metal cation site is built by His-160, His-205, and His-260. Residues Lys-268, Asn-277, and Arg-286 each coordinate substrate.

The protein belongs to the PdxA family. Homodimer. Zn(2+) serves as cofactor. Mg(2+) is required as a cofactor. It depends on Co(2+) as a cofactor.

The protein localises to the cytoplasm. It carries out the reaction 4-(phosphooxy)-L-threonine + NAD(+) = 3-amino-2-oxopropyl phosphate + CO2 + NADH. It participates in cofactor biosynthesis; pyridoxine 5'-phosphate biosynthesis; pyridoxine 5'-phosphate from D-erythrose 4-phosphate: step 4/5. Functionally, catalyzes the NAD(P)-dependent oxidation of 4-(phosphooxy)-L-threonine (HTP) into 2-amino-3-oxo-4-(phosphooxy)butyric acid which spontaneously decarboxylates to form 3-amino-2-oxopropyl phosphate (AHAP). The sequence is that of 4-hydroxythreonine-4-phosphate dehydrogenase from Xanthomonas campestris pv. campestris (strain B100).